Here is a 518-residue protein sequence, read N- to C-terminus: U-box domain-containing protein 57 (518 aa).

Positions Glu86–His142 form a coiled coil. The Protein kinase domain occupies Phe159–Ile409. The U-box domain maps to Ser434–Asn508.

The enzyme catalyses S-ubiquitinyl-[E2 ubiquitin-conjugating enzyme]-L-cysteine + [acceptor protein]-L-lysine = [E2 ubiquitin-conjugating enzyme]-L-cysteine + N(6)-ubiquitinyl-[acceptor protein]-L-lysine.. It participates in protein modification; protein ubiquitination. Functionally, possesses E3 ubiquitin-protein ligase in vitro. May be involved in cell death signaling. The polypeptide is U-box domain-containing protein 57 (PUB57) (Oryza sativa subsp. japonica (Rice)).